Consider the following 438-residue polypeptide: Aminopeptidase E (438 aa).

Residues C70, H362, and N383 contribute to the active site.

The protein belongs to the peptidase C1 family.

The protein localises to the cytoplasm. Its function is as follows. Can hydrolyze internal peptide bonds in Met-enkephalin and bradykinin; however, hydrolysis of alpha-, beta-, and kappa-caseins is not detected. The polypeptide is Aminopeptidase E (pepE) (Lactobacillus helveticus (Lactobacillus suntoryeus)).